The primary structure comprises 526 residues: Cytochrome P450 monooxygenase 253 (526 aa).

3 helical membrane-spanning segments follow: residues 13-33 (IASSTIGQRILLALALGLLLI), 115-135 (FIMAGEILTGGMLIVFTGYGK), and 306-326 (IGAGAETTAASLSVFMLAMTL). Cysteine 451 lines the heme pocket.

It belongs to the cytochrome P450 family. Requires heme as cofactor.

It localises to the membrane. The protein operates within secondary metabolite biosynthesis. In terms of biological role, cytochrome P450 monooxygenase that is able to use delta(6)-protoilludene as a substrate to produce delta(6)-protoilludene-8-ol. The protein is Cytochrome P450 monooxygenase 253 of Postia placenta (strain ATCC 44394 / Madison 698-R) (Brown rot fungus).